Reading from the N-terminus, the 275-residue chain is Hydroxyethylthiazole kinase (275 aa).

A substrate-binding site is contributed by M50. Residues R126 and S171 each contribute to the ATP site. A200 is a substrate binding site.

It belongs to the Thz kinase family. Mg(2+) is required as a cofactor.

It catalyses the reaction 5-(2-hydroxyethyl)-4-methylthiazole + ATP = 4-methyl-5-(2-phosphooxyethyl)-thiazole + ADP + H(+). Its pathway is cofactor biosynthesis; thiamine diphosphate biosynthesis; 4-methyl-5-(2-phosphoethyl)-thiazole from 5-(2-hydroxyethyl)-4-methylthiazole: step 1/1. Functionally, catalyzes the phosphorylation of the hydroxyl group of 4-methyl-5-beta-hydroxyethylthiazole (THZ). This Acinetobacter baumannii (strain SDF) protein is Hydroxyethylthiazole kinase.